Consider the following 431-residue polypeptide: Putative transcription factor R429 (431 aa).

Residues 28–95 (NKFENMSKAL…SIENCSESLD (68 aa)) are a coiled coil. The segment at 142 to 187 (SQQENSSESNNDIVKNGTGGSTSKRKKIQPSNRCSGSKTGKVTETK) is disordered. Low complexity predominate over residues 143 to 152 (QQENSSESNN). Residues 170–181 (QPSNRCSGSKTG) are compositionally biased toward polar residues. A zinc finger spans residues 218–241 (CSVPDCDGEKILNQNDGYMVCKKC).

This sequence belongs to the nucleo-cytoplasmic large DNA viruses (NCLDVs) VLTF-3 family.

In terms of biological role, putative transcription factor. The sequence is that of Putative transcription factor R429 from Acanthamoeba polyphaga (Amoeba).